The sequence spans 202 residues: Small ribosomal subunit protein uS4c (202 aa).

Basic residues predominate over residues 1-13; that stretch reads MSRYRGPRMKMIR. Residues 1 to 41 are disordered; the sequence is MSRYRGPRMKMIRRPGTLPGLTSKTPGTKVGSSDRSTSSKK. Residues 29–41 are compositionally biased toward low complexity; that stretch reads KVGSSDRSTSSKK. The S4 RNA-binding domain maps to 90 to 153; sequence MRLDNTIFRL…KCRLVDRRDM (64 aa).

It belongs to the universal ribosomal protein uS4 family. Part of the 30S ribosomal subunit. Contacts protein S5. The interaction surface between S4 and S5 is involved in control of translational fidelity.

Its subcellular location is the plastid. Its function is as follows. One of the primary rRNA binding proteins, it binds directly to 16S rRNA where it nucleates assembly of the body of the 30S subunit. With S5 and S12 plays an important role in translational accuracy. The chain is Small ribosomal subunit protein uS4c (rps4) from Aneura mirabilis (Parasitic liverwort).